The sequence spans 487 residues: Serine/threonine-protein kinase 4 (487 aa).

At methionine 1 the chain carries N-acetylmethionine. A Phosphothreonine modification is found at threonine 3. Positions 30–281 (FDVLEKLGEG…ATQLLQHPFV (252 aa)) constitute a Protein kinase domain. ATP-binding positions include 36-44 (LGEGSYGSV) and lysine 59. The active-site Proton acceptor is aspartate 149. Threonine 183 is modified (phosphothreonine; by autocatalysis). Serine 265 is modified (phosphoserine). The stretch at 290-310 (LRDLINEAMDVKLKRQESQQR) forms a coiled coil. The segment covering 303–312 (KRQESQQREV) has biased composition (basic and acidic residues). A disordered region spans residues 303–332 (KRQESQQREVDQDDEENSEEDEMDSGTMVR). A compositionally biased stretch (acidic residues) spans 313-326 (DQDDEENSEEDEMD). Phosphoserine is present on serine 320. A phosphothreonine mark is found at threonine 340 and threonine 367. Residue threonine 387 is modified to Phosphothreonine; by PKB/AKT1. A phosphoserine mark is found at serine 410 and serine 414. At tyrosine 433 the chain carries Phosphotyrosine. The 48-residue stretch at 433–480 (YEFLKSWTVEDLQKRLLALDPMMEQEIEEIRQKYQSKRQPILDAIEAK) folds into the SARAH domain.

Belongs to the protein kinase superfamily. STE Ser/Thr protein kinase family. STE20 subfamily. As to quaternary structure, homodimer; mediated via the coiled-coil region. Interacts with NORE1, which inhibits autoactivation. Interacts with and stabilizes SAV1. Interacts with RASSF1. Interacts with FOXO3. Interacts with RASSF2 (via SARAH domain). Interacts with AR, PKB/AKT1, TNNI3 and SIRT1. Interacts with DLG5 (via PDZ domain 3). Interacts with MARK3 and SCRIB in the presence of DLG5. The cofactor is Mg(2+). Post-translationally, autophosphorylated on serine and threonine residues. Phosphorylation at Thr-387 by PKB/AKT1, leads to inhibition of its: kinase activity, nuclear translocation and autophosphorylation at Thr-183. It also diminishes its cleavage by caspases and its ability to phosphorylate FOXO3. Proteolytically cleaved by caspase-3 during apoptosis at Asp-326 and Asp-349 resulting in a 37 kDa or a 39 kDa subunit respectively. The 39 kDa subunit is further cleaved into the 37 kDa form. Proteolytic cleavage results in kinase activation and nuclear translocation of the truncated form (MST1/N). It is less likely that cleavage at Asp-349 is a prerequisite for activation as this site is not conserved in the murine ortholog.

The protein resides in the cytoplasm. Its subcellular location is the nucleus. It carries out the reaction L-seryl-[protein] + ATP = O-phospho-L-seryl-[protein] + ADP + H(+). The enzyme catalyses L-threonyl-[protein] + ATP = O-phospho-L-threonyl-[protein] + ADP + H(+). Inhibited by the C-terminal non-catalytic region. Activated by caspase-cleavage. Full activation also requires homodimerization and autophosphorylation of Thr-183. Activated by RASSF1 which acts by preventing its dephosphorylation. In terms of biological role, stress-activated, pro-apoptotic kinase which, following caspase-cleavage, enters the nucleus and induces chromatin condensation followed by internucleosomal DNA fragmentation. Key component of the Hippo signaling pathway which plays a pivotal role in organ size control and tumor suppression by restricting proliferation and promoting apoptosis. The core of this pathway is composed of a kinase cascade wherein STK3/MST2 and STK4/MST1, in complex with its regulatory protein SAV1, phosphorylates and activates LATS1/2 in complex with its regulatory protein MOB1, which in turn phosphorylates and inactivates YAP1 oncoprotein and WWTR1/TAZ. Phosphorylation of YAP1 by LATS2 inhibits its translocation into the nucleus to regulate cellular genes important for cell proliferation, cell death, and cell migration. STK3/MST2 and STK4/MST1 are required to repress proliferation of mature hepatocytes, to prevent activation of facultative adult liver stem cells (oval cells), and to inhibit tumor formation. Phosphorylates 'Ser-14' of histone H2B (H2BS14ph) during apoptosis. Phosphorylates FOXO3 upon oxidative stress, which results in its nuclear translocation and cell death initiation. Phosphorylates MOBKL1A, MOBKL1B and RASSF2. Phosphorylates TNNI3 (cardiac Tn-I) and alters its binding affinity to TNNC1 (cardiac Tn-C) and TNNT2 (cardiac Tn-T). Phosphorylates FOXO1 on 'Ser-212' and regulates its activation and stimulates transcription of PMAIP1 in a FOXO1-dependent manner. Phosphorylates SIRT1 and inhibits SIRT1-mediated p53/TP53 deacetylation, thereby promoting p53/TP53 dependent transcription and apoptosis upon DNA damage. Acts as an inhibitor of PKB/AKT1. Phosphorylates AR on 'Ser-650' and suppresses its activity by intersecting with PKB/AKT1 signaling and antagonizing formation of AR-chromatin complexes. This is Serine/threonine-protein kinase 4 (STK4) from Colobus guereza (Mantled guereza).